Reading from the N-terminus, the 129-residue chain is uncharacterized protein (129 aa).

3 helical membrane passes run 15-35 (IFII…IFVF), 48-68 (IFSF…YYFF), and 107-127 (INIF…NLVC).

The protein localises to the membrane. This is an uncharacterized protein from Saccharomyces cerevisiae (strain ATCC 204508 / S288c) (Baker's yeast).